The chain runs to 162 residues: Shikimate kinase (162 aa).

An ATP-binding site is contributed by 11–16 (GSGKSS). A Mg(2+)-binding site is contributed by Ser15. Asp33, Arg57, and Gly80 together coordinate substrate. The interval 109–123 (NQKEREKRPLLNNLT) is LID domain. Arg116 contacts ATP. Arg132 is a substrate binding site.

Belongs to the shikimate kinase family. As to quaternary structure, monomer. The cofactor is Mg(2+).

Its subcellular location is the cytoplasm. It carries out the reaction shikimate + ATP = 3-phosphoshikimate + ADP + H(+). Its pathway is metabolic intermediate biosynthesis; chorismate biosynthesis; chorismate from D-erythrose 4-phosphate and phosphoenolpyruvate: step 5/7. Its function is as follows. Catalyzes the specific phosphorylation of the 3-hydroxyl group of shikimic acid using ATP as a cosubstrate. The polypeptide is Shikimate kinase (aroK) (Helicobacter pylori (strain ATCC 700392 / 26695) (Campylobacter pylori)).